We begin with the raw amino-acid sequence, 130 residues long: MIQQETILQVADNSGVKKVMCVKVLGGSKKRYATLGDEIIVAVKEAQPAYGLRDGQGKKVHNKAVQRAVVVRTKKEVRRPDGTYIRFDDNAVAIIDDKGNPKGTRIFGPVARELRDKKYMKIISLAPEVL.

This sequence belongs to the universal ribosomal protein uL14 family. As to quaternary structure, part of the 50S ribosomal subunit. Forms a cluster with proteins L3 and L19. In the 70S ribosome, L14 and L19 interact and together make contacts with the 16S rRNA in bridges B5 and B8.

Its function is as follows. Binds to 23S rRNA. Forms part of two intersubunit bridges in the 70S ribosome. The protein is Large ribosomal subunit protein uL14 of Leptospira biflexa serovar Patoc (strain Patoc 1 / Ames).